The chain runs to 902 residues: HTH-type transcriptional regulator MalT (902 aa).

39 to 46 is an ATP binding site; sequence SPAGYGKT. Positions 830 to 895 constitute an HTH luxR-type domain; sequence ELIRTSPLTQ…DAVQHAQQLL (66 aa). Residues 854–873 constitute a DNA-binding region (H-T-H motif); the sequence is NEQIAGELAVAATTIKTHIR.

It belongs to the MalT family. As to quaternary structure, monomer in solution. Oligomerizes to an active state in the presence of the positive effectors ATP and maltotriose.

With respect to regulation, activated by ATP and maltotriose, which are both required for DNA binding. Positively regulates the transcription of the maltose regulon whose gene products are responsible for uptake and catabolism of malto-oligosaccharides. Specifically binds to the promoter region of its target genes, recognizing a short DNA motif called the MalT box. The chain is HTH-type transcriptional regulator MalT from Salmonella dublin (strain CT_02021853).